A 277-amino-acid polypeptide reads, in one-letter code: Ubiquitin-conjugating enzyme suppressor 1 (277 aa).

Positions 254–277 (RTLACPDETNDNRGSEHYTKRKKI) are disordered.

Its function is as follows. Not known; its elevated expression suppresses the conditional cell cycle defects associated with UBC3/CDC34 mutations. The chain is Ubiquitin-conjugating enzyme suppressor 1 (UBS1) from Saccharomyces cerevisiae (strain ATCC 204508 / S288c) (Baker's yeast).